A 311-amino-acid polypeptide reads, in one-letter code: DNA-directed RNA polymerase subunit alpha (311 aa).

The alpha N-terminal domain (alpha-NTD) stretch occupies residues 1–226; that stretch reads MIEFEKPNIT…EHLDLFTNLT (226 aa). Residues 243–311 form an alpha C-terminal domain (alpha-CTD) region; it reads DDRILDRTIE…IDLGLGLKDK (69 aa).

It belongs to the RNA polymerase alpha chain family. Homodimer. The RNAP catalytic core consists of 2 alpha, 1 beta, 1 beta' and 1 omega subunit. When a sigma factor is associated with the core the holoenzyme is formed, which can initiate transcription.

It catalyses the reaction RNA(n) + a ribonucleoside 5'-triphosphate = RNA(n+1) + diphosphate. DNA-dependent RNA polymerase catalyzes the transcription of DNA into RNA using the four ribonucleoside triphosphates as substrates. This is DNA-directed RNA polymerase subunit alpha from Streptococcus pneumoniae serotype 4 (strain ATCC BAA-334 / TIGR4).